A 375-amino-acid chain; its full sequence is UDP-N-acetylglucosamine--N-acetylmuramyl-(pentapeptide) pyrophosphoryl-undecaprenol N-acetylglucosamine transferase (375 aa).

UDP-N-acetyl-alpha-D-glucosamine contacts are provided by residues 15 to 17 (TGG), asparagine 126, arginine 169, serine 197, and glutamine 298.

This sequence belongs to the glycosyltransferase 28 family. MurG subfamily.

The protein localises to the cell inner membrane. It carries out the reaction di-trans,octa-cis-undecaprenyl diphospho-N-acetyl-alpha-D-muramoyl-L-alanyl-D-glutamyl-meso-2,6-diaminopimeloyl-D-alanyl-D-alanine + UDP-N-acetyl-alpha-D-glucosamine = di-trans,octa-cis-undecaprenyl diphospho-[N-acetyl-alpha-D-glucosaminyl-(1-&gt;4)]-N-acetyl-alpha-D-muramoyl-L-alanyl-D-glutamyl-meso-2,6-diaminopimeloyl-D-alanyl-D-alanine + UDP + H(+). It functions in the pathway cell wall biogenesis; peptidoglycan biosynthesis. In terms of biological role, cell wall formation. Catalyzes the transfer of a GlcNAc subunit on undecaprenyl-pyrophosphoryl-MurNAc-pentapeptide (lipid intermediate I) to form undecaprenyl-pyrophosphoryl-MurNAc-(pentapeptide)GlcNAc (lipid intermediate II). This Rhodopseudomonas palustris (strain BisB18) protein is UDP-N-acetylglucosamine--N-acetylmuramyl-(pentapeptide) pyrophosphoryl-undecaprenol N-acetylglucosamine transferase.